The chain runs to 218 residues: MTPAGDTPERGSGDRAVAEAAERAKATGARNIPVFDDLPLPADTANLRDGVSLSDSLLALLPLVGVWRGEGEGRDADGDYRFGQQIVVSHDGGDYLNWEARSWRLDESGEYHSPALRETGYWRFVTDPADPHETQAIELLLAHSSGYIELFYGRPLNQSSWELVTDALARSKSGTLVGGAKRLYGIVEGGDLGYVEERVDADGGLVPHLSARLSRYVG.

A disordered region spans residues Met1–Ala24. Over residues Thr7 to Ala24 the composition is skewed to basic and acidic residues. Residues Gly65–Gly71 carry the GXWXGXG motif. Residues Lys181 and His208 each coordinate heme b.

Belongs to the nitrobindin family. As to quaternary structure, homodimer. The cofactor is heme b.

It catalyses the reaction peroxynitrite = nitrate. The protein operates within nitrogen metabolism. In terms of biological role, heme-binding protein able to scavenge peroxynitrite and to protect free L-tyrosine against peroxynitrite-mediated nitration, by acting as a peroxynitrite isomerase that converts peroxynitrite to nitrate. Therefore, this protein likely plays a role in peroxynitrite sensing and in the detoxification of reactive nitrogen and oxygen species (RNS and ROS, respectively). Is able to bind nitric oxide (NO) in vitro, but may act as a sensor of peroxynitrite levels in vivo. The chain is Peroxynitrite isomerase 2 from Mycolicibacterium smegmatis (strain ATCC 700084 / mc(2)155) (Mycobacterium smegmatis).